Here is a 282-residue protein sequence, read N- to C-terminus: Probable septum site-determining protein MinC (282 aa).

Positions 108–127 (AAARSADEESANAAAAAPAA) are disordered. Positions 118–127 (ANAAAAAPAA) are enriched in low complexity.

Belongs to the MinC family. In terms of assembly, interacts with MinD and FtsZ.

Functionally, cell division inhibitor that blocks the formation of polar Z ring septums. Rapidly oscillates between the poles of the cell to destabilize FtsZ filaments that have formed before they mature into polar Z rings. Prevents FtsZ polymerization. The polypeptide is Probable septum site-determining protein MinC (Paraburkholderia xenovorans (strain LB400)).